Reading from the N-terminus, the 39-residue chain is Photosystem II reaction center protein J (39 aa).

A helical membrane pass occupies residues 7 to 27 (IPLWLVATIAGLGVIAVLGLF).

This sequence belongs to the PsbJ family. In terms of assembly, PSII is composed of 1 copy each of membrane proteins PsbA, PsbB, PsbC, PsbD, PsbE, PsbF, PsbH, PsbI, PsbJ, PsbK, PsbL, PsbM, PsbT, PsbX, PsbY, PsbZ, Psb30/Ycf12, peripheral proteins PsbO, CyanoQ (PsbQ), PsbU, PsbV and a large number of cofactors. It forms dimeric complexes.

It localises to the cellular thylakoid membrane. In terms of biological role, one of the components of the core complex of photosystem II (PSII). PSII is a light-driven water:plastoquinone oxidoreductase that uses light energy to abstract electrons from H(2)O, generating O(2) and a proton gradient subsequently used for ATP formation. It consists of a core antenna complex that captures photons, and an electron transfer chain that converts photonic excitation into a charge separation. In Microcystis aeruginosa (strain NIES-843 / IAM M-2473), this protein is Photosystem II reaction center protein J.